A 414-amino-acid polypeptide reads, in one-letter code: 3-oxoacyl-[acyl-carrier-protein] synthase 2 (414 aa).

In terms of domain architecture, Ketosynthase family 3 (KS3) spans 3–411 (KRRVVITGLG…GTNGTLVLSR (409 aa)). Catalysis depends on for beta-ketoacyl synthase activity residues cysteine 164, histidine 304, and histidine 341.

The protein belongs to the thiolase-like superfamily. Beta-ketoacyl-ACP synthases family. In terms of assembly, homodimer.

The enzyme catalyses a fatty acyl-[ACP] + malonyl-[ACP] + H(+) = a 3-oxoacyl-[ACP] + holo-[ACP] + CO2. The catalysed reaction is (9Z)-hexadecenoyl-[ACP] + malonyl-[ACP] + H(+) = 3-oxo-(11Z)-octadecenoyl-[ACP] + holo-[ACP] + CO2. Its pathway is lipid metabolism; fatty acid biosynthesis. Its function is as follows. Involved in the type II fatty acid elongation cycle. Catalyzes the elongation of a wide range of acyl-ACP by the addition of two carbons from malonyl-ACP to an acyl acceptor. Can efficiently catalyze the conversion of palmitoleoyl-ACP (cis-hexadec-9-enoyl-ACP) to cis-vaccenoyl-ACP (cis-octadec-11-enoyl-ACP), an essential step in the thermal regulation of fatty acid composition. The protein is 3-oxoacyl-[acyl-carrier-protein] synthase 2 (fabF) of Coxiella burnetii (strain RSA 493 / Nine Mile phase I).